Reading from the N-terminus, the 147-residue chain is Large ribosomal subunit protein uL15 (147 aa).

The segment covering 1-20 (MTLRLNDLKPADGARTERTR) has biased composition (basic and acidic residues). The disordered stretch occupies residues 1 to 61 (MTLRLNDLKP…GFEGGQTPMQ (61 aa)). Over residues 23–33 (RGIGSGLGKTA) the composition is skewed to gly residues. Residues 34 to 47 (GRGHKGSFARKGGG) show a composition bias toward basic residues.

This sequence belongs to the universal ribosomal protein uL15 family. As to quaternary structure, part of the 50S ribosomal subunit.

Its function is as follows. Binds to the 23S rRNA. The chain is Large ribosomal subunit protein uL15 from Xanthomonas axonopodis pv. citri (strain 306).